Here is a 1413-residue protein sequence, read N- to C-terminus: DNA-directed RNA polymerase subunit beta' (1413 aa).

Zn(2+) contacts are provided by Cys70, Cys72, Cys85, and Cys88. Asp460, Asp462, and Asp464 together coordinate Mg(2+). Cys814, Cys888, Cys895, and Cys898 together coordinate Zn(2+).

It belongs to the RNA polymerase beta' chain family. The RNAP catalytic core consists of 2 alpha, 1 beta, 1 beta' and 1 omega subunit. When a sigma factor is associated with the core the holoenzyme is formed, which can initiate transcription. Requires Mg(2+) as cofactor. Zn(2+) serves as cofactor.

The catalysed reaction is RNA(n) + a ribonucleoside 5'-triphosphate = RNA(n+1) + diphosphate. Its function is as follows. DNA-dependent RNA polymerase catalyzes the transcription of DNA into RNA using the four ribonucleoside triphosphates as substrates. This is DNA-directed RNA polymerase subunit beta' from Buchnera aphidicola subsp. Schizaphis graminum (strain Sg).